The following is a 181-amino-acid chain: S-fimbrial protein subunit SfaA (181 aa).

Positions 1-24 (MKLKFISMAVFSALTLGVATNASA) are cleaved as a signal peptide. C44 and C84 are oxidised to a cystine.

It belongs to the fimbrial protein family.

The protein resides in the fimbrium. Its function is as follows. Fimbriae (also called pili), polar filaments radiating from the surface of the bacterium to a length of 0.5-1.5 micrometers and numbering 100-300 per cell, enable bacteria to colonize the epithelium of specific host organs. The major fimbrial subunit. Interacts with alpha-sialic acid-(2-3)-beta-Gal containing receptors. It belongs to the group of Mrh (Mannose-resistant hemagglutination) fimbrial proteins. This Escherichia coli O6:K15:H31 (strain 536 / UPEC) protein is S-fimbrial protein subunit SfaA (sfaA).